The primary structure comprises 665 residues: Long chain acyl-CoA synthetase 3 (665 aa).

228–239 (IMYTSGTTGDPK) contacts ATP. A fatty acid-binding region spans residues 495–519 (DGWLHTGDVGEWQPDGAMKIIDRKK).

The protein belongs to the ATP-dependent AMP-binding enzyme family. Mg(2+) serves as cofactor.

It carries out the reaction a long-chain fatty acid + ATP + CoA = a long-chain fatty acyl-CoA + AMP + diphosphate. Its pathway is lipid metabolism; fatty acid metabolism. Functionally, activation of long-chain fatty acids for both synthesis of cellular lipids, and degradation via beta-oxidation. Preferentially uses palmitate, palmitoleate, oleate and linoleate. The sequence is that of Long chain acyl-CoA synthetase 3 (LACS3) from Arabidopsis thaliana (Mouse-ear cress).